The chain runs to 120 residues: MSTPRKEQTQKRHRRLRRHLEGTPERPRLAVYRSNEHIYAQVIDDAAQHTLAAASSLDKDLRTSLNNGANCDASTAVGQLVAKRAIAKGIQQVVFDRGGNLYHGRVKALAEAAREAGLQF.

Positions 1–10 (MSTPRKEQTQ) are enriched in basic and acidic residues. The interval 1–25 (MSTPRKEQTQKRHRRLRRHLEGTPE) is disordered.

The protein belongs to the universal ribosomal protein uL18 family. As to quaternary structure, part of the 50S ribosomal subunit; part of the 5S rRNA/L5/L18/L25 subcomplex. Contacts the 5S and 23S rRNAs.

Functionally, this is one of the proteins that bind and probably mediate the attachment of the 5S RNA into the large ribosomal subunit, where it forms part of the central protuberance. The protein is Large ribosomal subunit protein uL18 of Synechococcus sp. (strain RCC307).